The sequence spans 2849 residues: Polycystin-1-like protein 1 (2849 aa).

The Extracellular segment spans residues methionine 1–proline 1748. 13 N-linked (GlcNAc...) asparagine glycosylation sites follow: asparagine 8, asparagine 295, asparagine 338, asparagine 376, asparagine 447, asparagine 482, asparagine 514, asparagine 605, asparagine 657, asparagine 751, asparagine 875, asparagine 926, and asparagine 937. PKD domains lie at serine 508–lysine 590 and valine 592–proline 673. An REJ domain is found at cysteine 674–arginine 1571. Positions asparagine 970–proline 987 are enriched in low complexity. 2 disordered regions span residues asparagine 970–serine 1068 and isoleucine 1081–leucine 1118. Basic and acidic residues predominate over residues arginine 1053–serine 1068. N-linked (GlcNAc...) asparagine glycosylation is found at asparagine 1233, asparagine 1301, asparagine 1306, asparagine 1572, asparagine 1681, and asparagine 1716. In terms of domain architecture, GAIN-B spans glutamine 1587–serine 1735. A disulfide bridge connects residues cysteine 1691 and cysteine 1717. The segment at cysteine 1691–serine 1735 is GPS. Residues glutamate 1749–alanine 1769 form a helical membrane-spanning segment. Topologically, residues lysine 1770–arginine 1956 are cytoplasmic. A PLAT domain is found at glutamine 1796–threonine 1913. Residues leucine 1957–glycine 1977 form a helical membrane-spanning segment. Topologically, residues glycine 1978–serine 1992 are extracellular. A helical membrane pass occupies residues phenylalanine 1993–leucine 2013. The Cytoplasmic segment spans residues phenylalanine 2014 to serine 2135. The disordered stretch occupies residues serine 2023–glutamine 2089. A helical membrane pass occupies residues alanine 2136–alanine 2156. Over tyrosine 2157–serine 2174 the chain is Extracellular. A helical membrane pass occupies residues valine 2175–alanine 2195. Residues tryptophan 2196–arginine 2281 are Cytoplasmic-facing. A helical transmembrane segment spans residues alanine 2282 to tyrosine 2302. Residues glycine 2303–histidine 2522 are Extracellular-facing. N-linked (GlcNAc...) asparagine glycosylation is present at asparagine 2426. A helical membrane pass occupies residues leucine 2523–tyrosine 2543. Topologically, residues arginine 2544–glutamate 2562 are cytoplasmic. A helical transmembrane segment spans residues leucine 2563–alanine 2583. Topologically, residues glycine 2584–glycine 2616 are extracellular. Residues isoleucine 2617–alanine 2637 traverse the membrane as a helical segment. The Cytoplasmic portion of the chain corresponds to serine 2638 to serine 2646. A helical transmembrane segment spans residues leucine 2647 to leucine 2667. At histidine 2668 to arginine 2711 the chain is on the extracellular side. A helical membrane pass occupies residues alanine 2712–leucine 2732. The Cytoplasmic portion of the chain corresponds to arginine 2733–phenylalanine 2849.

It belongs to the polycystin family. Heterodimer. Interacts with PKD2 to form a calcium channel. Interacts with PKD2L1; to form ciliary calcium channel. May interact with GNA12, GNAS, GNAI1 and GNAI2. Detected in testis and in fetal and adult heart.

Its subcellular location is the cell projection. It is found in the cilium membrane. Functionally, component of a calcium-permeant ion channel formed by PKD1L2 and PKD1L1 in primary cilia, where it controls cilium calcium concentration, without affecting cytoplasmic calcium concentration, and regulates sonic hedgehog/SHH signaling and GLI2 transcription. The PKD1L1:PKD2L1 channel complex is mechanosensitive only at high pressures and is highly temperature sensitive. Also involved in left/right axis specification downstream of nodal flow by forming a complex with PKD2 in cilia to facilitate flow detection in left/right patterning. May function as a G-protein-coupled receptor. The chain is Polycystin-1-like protein 1 from Homo sapiens (Human).